The chain runs to 152 residues: MSGKKEVKAPKVVEALSAKIPCGPSELVFGVAHIFASFNDTFVHVTDLSSKETIVRVTGGMKVKTDRDESSPYAATMAAQDVALRCKELGVTALHIKLRATGGNGSKTPGPGAQSALRALARSGMRIGRIEDVTPIPTDSTRRKSGHRGRRL.

The interval 133-152 (VTPIPTDSTRRKSGHRGRRL) is disordered. The span at 143-152 (RKSGHRGRRL) shows a compositional bias: basic residues.

This sequence belongs to the universal ribosomal protein uS11 family. In terms of assembly, component of the small ribosomal subunit. Part of the small subunit (SSU) processome, composed of more than 70 proteins and the RNA chaperone small nucleolar RNA (snoRNA) U3.

The protein localises to the cytoplasm. It is found in the nucleus. The protein resides in the nucleolus. In terms of biological role, component of the small ribosomal subunit. The ribosome is a large ribonucleoprotein complex responsible for the synthesis of proteins in the cell. Part of the small subunit (SSU) processome, first precursor of the small eukaryotic ribosomal subunit. During the assembly of the SSU processome in the nucleolus, many ribosome biogenesis factors, an RNA chaperone and ribosomal proteins associate with the nascent pre-rRNA and work in concert to generate RNA folding, modifications, rearrangements and cleavage as well as targeted degradation of pre-ribosomal RNA by the RNA exosome. The chain is Small ribosomal subunit protein uS11 (rps14) from Dictyostelium discoideum (Social amoeba).